Reading from the N-terminus, the 79-residue chain is ATP synthase subunit beta (79 aa).

This sequence belongs to the ATPase alpha/beta chains family. In terms of assembly, F-type ATPases have 2 components, CF(1) - the catalytic core - and CF(0) - the membrane proton channel. CF(1) has five subunits: alpha(3), beta(3), gamma(1), delta(1), epsilon(1). CF(0) has three main subunits: a(1), b(2) and c(9-12). The alpha and beta chains form an alternating ring which encloses part of the gamma chain. CF(1) is attached to CF(0) by a central stalk formed by the gamma and epsilon chains, while a peripheral stalk is formed by the delta and b chains.

The protein localises to the cell membrane. The catalysed reaction is ATP + H2O + 4 H(+)(in) = ADP + phosphate + 5 H(+)(out). In terms of biological role, produces ATP from ADP in the presence of a proton gradient across the membrane. The catalytic sites are hosted primarily by the beta subunits. The protein is ATP synthase subunit beta (atpD) of Streptococcus downei (Streptococcus sobrinus).